We begin with the raw amino-acid sequence, 404 residues long: Caspase-1 (404 aa).

A CARD domain is found at Met1 to Ala91. A propeptide spanning residues Met1–Asp119 is cleaved from the precursor. Residue Lys134 forms a Glycyl lysine isopeptide (Lys-Gly) (interchain with G-Cter in ubiquitin) linkage. Residues His237 and Cys285 contribute to the active site. The propeptide at Ser298–Asp316 is interdomain linker. At Ser302 the chain carries Phosphoserine.

The protein belongs to the peptidase C14A family. As to quaternary structure, heterotetramer that consists of two anti-parallel arranged heterodimers, each one formed by a 20 kDa (Caspase-1 subunit p20) and a 10 kDa (Caspase-1 subunit p10) subunit. May be a component of the inflammasome, a protein complex which also includes PYCARD, CARD8 and NLRP2 and whose function would be the activation of pro-inflammatory caspases. Component of the AIM2 PANoptosome complex, a multiprotein complex that drives inflammatory cell death (PANoptosis). Interacts with CARD8; interacts with the released C-terminus of CARD8 which forms an inflammasome and directly activates CASP1 to promote pyroptosis. Both the p10 and p20 subunits interact with MEFV. Interacts with CARD17P/INCA and CARD18. Interacts with SERPINB1; this interaction regulates CASP1 activity. In terms of assembly, heterotetramer that consists of two anti-parallel arranged heterodimers, each one formed by a 20 kDa (Caspase-1 subunit p20) and a 10 kDa (Caspase-1 subunit p10) subunit. Can form a heterodimer with isoform epsilon which then has an inhibitory effect. Heterotetramer that consists of two anti-parallel arranged heterodimers, each one formed by a 20 kDa (Caspase-1 subunit p20) and a 10 kDa (Caspase-1 subunit p10) subunit. As to quaternary structure, can form a heterodimer with Caspase-1 subunit p20 which then has an inhibitory effect. The two subunits are derived from the precursor sequence by an autocatalytic mechanism. Post-translationally, ubiquitinated via 'Lys-11'-linked polyubiquitination. Deubiquitinated by USP8. In terms of processing, cleavage in the interdomain linker region is required to induce pyroptosis. As to expression, expressed in larger amounts in spleen and lung. Detected in liver, heart, small intestine, colon, thymus, prostate, skeletal muscle, peripheral blood leukocytes, kidney and testis. No expression in the brain.

The protein resides in the cytoplasm. Its subcellular location is the cell membrane. The enzyme catalyses Strict requirement for an Asp residue at position P1 and has a preferred cleavage sequence of Tyr-Val-Ala-Asp-|-.. (Microbial infection) Specifically inhibited by the cowpox virus Crma protein. Its function is as follows. Thiol protease involved in a variety of inflammatory processes by proteolytically cleaving other proteins, such as the precursors of the inflammatory cytokines interleukin-1 beta (IL1B) and interleukin 18 (IL18) as well as the pyroptosis inducer Gasdermin-D (GSDMD), into active mature peptides. Plays a key role in cell immunity as an inflammatory response initiator: once activated through formation of an inflammasome complex, it initiates a pro-inflammatory response through the cleavage of the two inflammatory cytokines IL1B and IL18, releasing the mature cytokines which are involved in a variety of inflammatory processes. Cleaves a tetrapeptide after an Asp residue at position P1. Also initiates pyroptosis, a programmed lytic cell death pathway, through cleavage of GSDMD. In contrast to cleavage of interleukin IL1B, recognition and cleavage of GSDMD is not strictly dependent on the consensus cleavage site but depends on an exosite interface on CASP1 that recognizes and binds the Gasdermin-D, C-terminal (GSDMD-CT) part. Cleaves and activates CASP7 in response to bacterial infection, promoting plasma membrane repair. Upon inflammasome activation, during DNA virus infection but not RNA virus challenge, controls antiviral immunity through the cleavage of CGAS, rendering it inactive. In apoptotic cells, cleaves SPHK2 which is released from cells and remains enzymatically active extracellularly. Functionally, apoptosis inactive. The chain is Caspase-1 (CASP1) from Homo sapiens (Human).